Consider the following 266-residue polypeptide: Indole-3-glycerol phosphate synthase (266 aa).

This sequence belongs to the TrpC family.

It catalyses the reaction 1-(2-carboxyphenylamino)-1-deoxy-D-ribulose 5-phosphate + H(+) = (1S,2R)-1-C-(indol-3-yl)glycerol 3-phosphate + CO2 + H2O. It functions in the pathway amino-acid biosynthesis; L-tryptophan biosynthesis; L-tryptophan from chorismate: step 4/5. This chain is Indole-3-glycerol phosphate synthase, found in Janthinobacterium sp. (strain Marseille) (Minibacterium massiliensis).